A 302-amino-acid chain; its full sequence is Methionyl-tRNA formyltransferase (302 aa).

108-111 (SLLP) is a binding site for (6S)-5,6,7,8-tetrahydrofolate. A compositionally biased stretch (basic and acidic residues) spans 276 to 288 (REGKRPMEPEEFL). Residues 276 to 302 (REGKRPMEPEEFLRGFPLPEGSRAHTA) form a disordered region.

This sequence belongs to the Fmt family.

The enzyme catalyses L-methionyl-tRNA(fMet) + (6R)-10-formyltetrahydrofolate = N-formyl-L-methionyl-tRNA(fMet) + (6S)-5,6,7,8-tetrahydrofolate + H(+). Attaches a formyl group to the free amino group of methionyl-tRNA(fMet). The formyl group appears to play a dual role in the initiator identity of N-formylmethionyl-tRNA by promoting its recognition by IF2 and preventing the misappropriation of this tRNA by the elongation apparatus. The chain is Methionyl-tRNA formyltransferase from Cereibacter sphaeroides (strain KD131 / KCTC 12085) (Rhodobacter sphaeroides).